A 436-amino-acid polypeptide reads, in one-letter code: Nicotinate phosphoribosyltransferase (436 aa).

The residue at position 231 (His-231) is a Phosphohistidine; by autocatalysis.

Belongs to the NAPRTase family. In terms of processing, transiently phosphorylated on a His residue during the reaction cycle. Phosphorylation strongly increases the affinity for substrates and increases the rate of nicotinate D-ribonucleotide production. Dephosphorylation regenerates the low-affinity form of the enzyme, leading to product release.

The enzyme catalyses nicotinate + 5-phospho-alpha-D-ribose 1-diphosphate + ATP + H2O = nicotinate beta-D-ribonucleotide + ADP + phosphate + diphosphate. The protein operates within cofactor biosynthesis; NAD(+) biosynthesis; nicotinate D-ribonucleotide from nicotinate: step 1/1. Its function is as follows. Catalyzes the synthesis of beta-nicotinate D-ribonucleotide from nicotinate and 5-phospho-D-ribose 1-phosphate at the expense of ATP. This chain is Nicotinate phosphoribosyltransferase, found in Vibrio parahaemolyticus serotype O3:K6 (strain RIMD 2210633).